The primary structure comprises 266 residues: Undecaprenyl-diphosphatase 1 (266 aa).

The next 8 membrane-spanning stretches (helical) occupy residues 1 to 21, 39 to 59, 83 to 103, 113 to 133, 141 to 161, 189 to 209, 218 to 238, and 244 to 264; these read MSIIEIIVLALIQGFTEFLPI, QGLAFDVAVHVGTLIAVVIYF, SKLGWWIILGTIPAAILGLLL, SAWVIAVTTIIFGLLLWYADA, IYQLNWKTALIIGLAQAVAMI, FLLAIPIISMMGLYYTVELAL, TLLLGVVLSFLSAYVCIYMFL, and MGMLPFVIYRLLLGVGLIVFL.

The protein belongs to the UppP family.

The protein resides in the cell inner membrane. The catalysed reaction is di-trans,octa-cis-undecaprenyl diphosphate + H2O = di-trans,octa-cis-undecaprenyl phosphate + phosphate + H(+). In terms of biological role, catalyzes the dephosphorylation of undecaprenyl diphosphate (UPP). Confers resistance to bacitracin. This is Undecaprenyl-diphosphatase 1 from Pseudoalteromonas translucida (strain TAC 125).